The chain runs to 407 residues: Arginine deiminase (407 aa).

Catalysis depends on cysteine 397, which acts as the Amidino-cysteine intermediate.

This sequence belongs to the arginine deiminase family.

The protein resides in the cytoplasm. It catalyses the reaction L-arginine + H2O = L-citrulline + NH4(+). It functions in the pathway amino-acid degradation; L-arginine degradation via ADI pathway; carbamoyl phosphate from L-arginine: step 1/2. The protein is Arginine deiminase of Salmonella choleraesuis (strain SC-B67).